Here is a 309-residue protein sequence, read N- to C-terminus: NAD kinase (309 aa).

Asp89 functions as the Proton acceptor in the catalytic mechanism. NAD(+) contacts are provided by residues 89–90, 163–164, His174, Arg191, Asp193, and 204–209; these read DG, NE, and TAYALS.

Belongs to the NAD kinase family. A divalent metal cation serves as cofactor.

Its subcellular location is the cytoplasm. The catalysed reaction is NAD(+) + ATP = ADP + NADP(+) + H(+). Functionally, involved in the regulation of the intracellular balance of NAD and NADP, and is a key enzyme in the biosynthesis of NADP. Catalyzes specifically the phosphorylation on 2'-hydroxyl of the adenosine moiety of NAD to yield NADP. The protein is NAD kinase of Shewanella sp. (strain MR-4).